The chain runs to 212 residues: Large ribosomal subunit protein uL3 (212 aa).

Over residues 139–153 the composition is skewed to polar residues; that stretch reads LSHRVTGSIGQNQTP. Residues 139-161 are disordered; sequence LSHRVTGSIGQNQTPGKVFKGKK. Gln-151 bears the N5-methylglutamine mark.

It belongs to the universal ribosomal protein uL3 family. As to quaternary structure, part of the 50S ribosomal subunit. Forms a cluster with proteins L14 and L19. Post-translationally, methylated by PrmB.

Its function is as follows. One of the primary rRNA binding proteins, it binds directly near the 3'-end of the 23S rRNA, where it nucleates assembly of the 50S subunit. This Baumannia cicadellinicola subsp. Homalodisca coagulata protein is Large ribosomal subunit protein uL3.